Consider the following 278-residue polypeptide: Probable endonuclease 4 (278 aa).

Residues H67, H107, E141, D173, H176, H210, D223, H225, and E255 each contribute to the Zn(2+) site.

This sequence belongs to the AP endonuclease 2 family. Requires Zn(2+) as cofactor.

The enzyme catalyses Endonucleolytic cleavage to 5'-phosphooligonucleotide end-products.. Its function is as follows. Endonuclease IV plays a role in DNA repair. It cleaves phosphodiester bonds at apurinic or apyrimidinic (AP) sites, generating a 3'-hydroxyl group and a 5'-terminal sugar phosphate. The polypeptide is Probable endonuclease 4 (Natronomonas pharaonis (strain ATCC 35678 / DSM 2160 / CIP 103997 / JCM 8858 / NBRC 14720 / NCIMB 2260 / Gabara) (Halobacterium pharaonis)).